A 234-amino-acid chain; its full sequence is Zinc finger FYVE domain-containing protein 21 (234 aa).

An FYVE-type zinc finger spans residues 44 to 104 (DKECPRCMQC…QCADCALVSH (61 aa)). Zn(2+) is bound by residues cysteine 50, cysteine 53, cysteine 66, cysteine 69, cysteine 74, cysteine 77, cysteine 96, and cysteine 99. Residues 107–234 (AEFYDKQLKV…TKLLYESRDQ (128 aa)) are PH-like.

In terms of assembly, interacts with PTK2/FAK1.

It localises to the cell junction. It is found in the focal adhesion. Its subcellular location is the cytoplasmic vesicle. The protein localises to the endosome. Plays a role in cell adhesion, and thereby in cell motility which requires repeated formation and disassembly of focal adhesions. Regulates microtubule-induced PTK2/FAK1 dephosphorylation, an event important for focal adhesion disassembly, as well as integrin beta-1/ITGB1 cell surface expression. The chain is Zinc finger FYVE domain-containing protein 21 (Zfyve21) from Rattus norvegicus (Rat).